A 1082-amino-acid chain; its full sequence is Importin-4 (1082 aa).

Methionine 1 carries the N-acetylmethionine modification. Residues 24-90 (ATEQLQTILR…KSLVLTALQK (67 aa)) form the Importin N-terminal domain. HEAT repeat units lie at residues 348 to 385 (KLCP…GAGD), 390 to 427 (RLLY…NLQP), 431 to 471 (SYSE…NLGP), 475 to 513 (PYLP…AAQD), 896 to 933 (QFVS…HGGC), and 937 to 975 (DHFP…ASPV).

Belongs to the importin beta family. In terms of assembly, found in a cytosolic complex with ASF1 (ASF1A or ASF1B) and histones H3 and H4.

The protein resides in the cytoplasm. Its subcellular location is the nucleus. Nuclear transport receptor that mediates nuclear import of proteins, such as histones, RPS3A, TNP2 and VDR. Serves as receptor for nuclear localization signals (NLS) in cargo substrates. Is thought to mediate docking of the importin/substrate complex to the nuclear pore complex (NPC) through binding to nucleoporin and the complex is subsequently translocated through the pore by an energy requiring, Ran-dependent mechanism. At the nucleoplasmic side of the NPC, Ran binds to the importin, the importin/substrate complex dissociates and importin is re-exported from the nucleus to the cytoplasm where GTP hydrolysis releases Ran. The directionality of nuclear import is thought to be conferred by an asymmetric distribution of the GTP- and GDP-bound forms of Ran between the cytoplasm and nucleus. Mediates the nuclear import of the histone H3-H4 dimer when in complex with ASF1 (ASF1A or ASF1B). Mediates the ligand-independent nuclear import of vitamin D receptor (VDR). The polypeptide is Importin-4 (Ipo4) (Mus musculus (Mouse)).